We begin with the raw amino-acid sequence, 295 residues long: Lipase 2 (295 aa).

The first 31 residues, 1–31, serve as a signal peptide directing secretion; the sequence is MPKPALRRVMTATVAAVGTLALGLTDATAHA. The Nucleophile role is filled by S48. 3 disulfide bridges follow: C65–C89, C138–C152, and C205–C254. H275 is an active-site residue.

Belongs to the 'GDSL' lipolytic enzyme family. Monomer.

It localises to the secreted. The catalysed reaction is a triacylglycerol + H2O = a diacylglycerol + a fatty acid + H(+). Strongly inhibited by Ag(+). The cations Ca(2+) and Mg(2+) do not significantly reduce the lipolytic activity of SCO7513, whereas high concentrations of Co(2+) and Cu(2+) partially inhibit it. Is not inhibited by DTT in vitro. Is resistant to PMSF inhibition, except in the presence of Ca(2+). In terms of biological role, catalyzes the hydrolysis of fatty acid esters with a preference for long chain fatty acids (C16-C18). This is Lipase 2 from Streptomyces coelicolor (strain ATCC BAA-471 / A3(2) / M145).